We begin with the raw amino-acid sequence, 641 residues long: SUMO-activating enzyme subunit 2-A (641 aa).

ATP-binding positions include 24–29, aspartate 48, 56–59, lysine 72, 95–96, and 117–122; these read GAGGIG, NLNR, SI, and DNNAAR. The Zn(2+) site is built by cysteine 158 and cysteine 161. Cysteine 173 serves as the catalytic Glycyl thioester intermediate. Positions 439 and 442 each coordinate Zn(2+). Residues 546–641 form a disordered region; it reads GDVPEKGPQK…EEDDDIIALD (96 aa). Residues 548–561 are compositionally biased toward basic and acidic residues; sequence VPEKGPQKPPEESV. Positions 562-579 are enriched in polar residues; sequence KNITNGSDDGAQPSTSKA. Composition is skewed to acidic residues over residues 582 to 594 and 630 to 641; these read QDDV…DEES and PVEEDDDIIALD.

The protein belongs to the ubiquitin-activating E1 family. As to quaternary structure, heterodimer of sae1 and uba2/sae2. The heterodimer corresponds to the two domains that are encoded on a single polypeptide chain in ubiquitin-activating enzyme E1. Interacts with ube2i.

Its subcellular location is the nucleus. It participates in protein modification; protein sumoylation. Its function is as follows. The heterodimer acts as an E1 ligase for sumo1, sumo2, and sumo3. It mediates ATP-dependent activation of sumo proteins followed by formation of a thioester bond between a sumo protein and a conserved active site cysteine residue on uba2/sae2. The chain is SUMO-activating enzyme subunit 2-A (uba2-a) from Xenopus laevis (African clawed frog).